A 436-amino-acid polypeptide reads, in one-letter code: Mitochondrial distribution and morphology protein 12 (436 aa).

The region spanning 1-436 is the SMP-LTD domain; it reads MSIEVNWGTA…VFPSFYTFLI (436 aa). Positions 73-84 are enriched in acidic residues; sequence DEDGDSGSEISE. Disordered regions lie at residues 73-98, 184-275, and 352-380; these read DEDGDSGSEISEELQHRTHDNPWDRT, AVAG…RMRE, and GSGSYSGQQETPGPSTGSSGGGNPSPHQK. Residues 85-98 show a composition bias toward basic and acidic residues; it reads ELQHRTHDNPWDRT. Composition is skewed to polar residues over residues 190–206 and 222–243; these read PFTTNWTDPSPMGQGNK and DSSNPASRPSTASTHPSGSNRS. The segment covering 244–255 has biased composition (basic and acidic residues); that stretch reads SHPDGHPEHNDD. A compositionally biased stretch (polar residues) spans 256–267; the sequence is PISSSENPLLQN.

The protein belongs to the MDM12 family. In terms of assembly, component of the ER-mitochondria encounter structure (ERMES) or MDM complex, composed of mmm1, mdm10, mdm12 and mdm34. A mmm1 homodimer associates with one molecule of mdm12 on each side in a pairwise head-to-tail manner, and the SMP-LTD domains of mmm1 and mdm12 generate a continuous hydrophobic tunnel for phospholipid trafficking.

The protein resides in the mitochondrion outer membrane. Its subcellular location is the endoplasmic reticulum membrane. Component of the ERMES/MDM complex, which serves as a molecular tether to connect the endoplasmic reticulum (ER) and mitochondria. Components of this complex are involved in the control of mitochondrial shape and protein biogenesis, and function in nonvesicular lipid trafficking between the ER and mitochondria. Mdm12 is required for the interaction of the ER-resident membrane protein mmm1 and the outer mitochondrial membrane-resident beta-barrel protein mdm10. The mdm12-mmm1 subcomplex functions in the major beta-barrel assembly pathway that is responsible for biogenesis of all mitochondrial outer membrane beta-barrel proteins, and acts in a late step after the SAM complex. The mdm10-mdm12-mmm1 subcomplex further acts in the TOM40-specific pathway after the action of the mdm12-mmm1 complex. Essential for establishing and maintaining the structure of mitochondria and maintenance of mtDNA nucleoids. The polypeptide is Mitochondrial distribution and morphology protein 12 (Emericella nidulans (strain FGSC A4 / ATCC 38163 / CBS 112.46 / NRRL 194 / M139) (Aspergillus nidulans)).